A 392-amino-acid chain; its full sequence is Phosphoglycerate kinase (392 aa).

Substrate contacts are provided by residues 21–23 (DLN), Arg-36, 59–62 (HLGR), Arg-114, and Arg-147. ATP contacts are provided by residues Lys-198, Glu-320, and 346 to 349 (GGDT).

It belongs to the phosphoglycerate kinase family. As to quaternary structure, monomer.

The protein resides in the cytoplasm. It catalyses the reaction (2R)-3-phosphoglycerate + ATP = (2R)-3-phospho-glyceroyl phosphate + ADP. It functions in the pathway carbohydrate degradation; glycolysis; pyruvate from D-glyceraldehyde 3-phosphate: step 2/5. The chain is Phosphoglycerate kinase from Nitrosomonas europaea (strain ATCC 19718 / CIP 103999 / KCTC 2705 / NBRC 14298).